Reading from the N-terminus, the 61-residue chain is Large ribosomal subunit protein uL30 (61 aa).

Belongs to the universal ribosomal protein uL30 family. In terms of assembly, part of the 50S ribosomal subunit.

This Lactobacillus acidophilus (strain ATCC 700396 / NCK56 / N2 / NCFM) protein is Large ribosomal subunit protein uL30.